Consider the following 451-residue polypeptide: tRNA pseudouridine synthase 2 (451 aa).

The interval 1–30 (MTSISKRKNQQEHIPAEDLETPKLPKREKI) is disordered. A compositionally biased stretch (basic and acidic residues) spans 9–30 (NQQEHIPAEDLETPKLPKREKI). Asp97 serves as the catalytic Nucleophile. Substrate is bound at residue Tyr157.

Belongs to the tRNA pseudouridine synthase TruA family. The cofactor is Zn(2+).

It localises to the nucleus. The enzyme catalyses a uridine in tRNA = a pseudouridine in tRNA. Formation of pseudouridine at positions 27 and 28 in the anticodon stem and loop of transfer RNAs; at positions 34 and 36 of intron-containing precursor tRNA(Ile) and at position 35 in the intron-containing tRNA(Tyr). In Schizosaccharomyces pombe (strain 972 / ATCC 24843) (Fission yeast), this protein is tRNA pseudouridine synthase 2 (pus2).